The following is a 199-amino-acid chain: Probable cobalt-precorrin-6B C(15)-methyltransferase (decarboxylating) (199 aa).

Residues Thr-24, 48–52 (GCGTG), Asp-72, and Ala-101 contribute to the S-adenosyl-L-methionine site.

This sequence belongs to the methyltransferase superfamily. Archaeal-type CbiT family.

The enzyme catalyses Co-precorrin-6B + S-adenosyl-L-methionine = Co-precorrin-7 + S-adenosyl-L-homocysteine + CO2. It functions in the pathway cofactor biosynthesis; adenosylcobalamin biosynthesis; cob(II)yrinate a,c-diamide from sirohydrochlorin (anaerobic route): step 8/10. Functionally, catalyzes the methylation of C-15 in cobalt-precorrin-6B followed by the decarboxylation of C-12 to form cobalt-precorrin-7. This is Probable cobalt-precorrin-6B C(15)-methyltransferase (decarboxylating) from Saccharolobus islandicus (strain L.S.2.15 / Lassen #1) (Sulfolobus islandicus).